A 748-amino-acid chain; its full sequence is Semaphorin-3B (748 aa).

Residues 1–25 (MGRAEAAAMIPGLALLWVAGLGDTA) form the signal peptide. One can recognise a Sema domain in the interval 30 to 512 (RLRLSFQELQ…SRSAVAQIAL (483 aa)). N-linked (GlcNAc...) asparagine glycosylation occurs at N82. Cysteines 102 and 113 form a disulfide. N-linked (GlcNAc...) asparagine glycosylation occurs at N124. Disulfide bonds link C131/C140, C268/C379, C292/C339, C515/C533, and C643/C709. In terms of domain architecture, Ig-like C2-type spans 561–659 (PSTLCSGDSS…FSQPLRRLVL (99 aa)). Residues 708-748 (MCRPQPGHHSVAADSRRKGRNRRMHVSELRAERGPRSAAHW) form a disordered region. Residues 732 to 742 (HVSELRAERGP) show a composition bias toward basic and acidic residues.

The protein belongs to the semaphorin family.

It localises to the secreted. Its function is as follows. Inhibits axonal extension by providing local signals to specify territories inaccessible for growing axons. The chain is Semaphorin-3B (Sema3b) from Mus musculus (Mouse).